The sequence spans 154 residues: 6,7-dimethyl-8-ribityllumazine synthase (154 aa).

5-amino-6-(D-ribitylamino)uracil contacts are provided by residues Phe22, 57–59 (AYE), and 81–83 (AVI). A (2S)-2-hydroxy-3-oxobutyl phosphate-binding site is contributed by 86–87 (GT). His89 functions as the Proton donor in the catalytic mechanism. Phe114 contributes to the 5-amino-6-(D-ribitylamino)uracil binding site. (2S)-2-hydroxy-3-oxobutyl phosphate is bound at residue Arg128.

The protein belongs to the DMRL synthase family. In terms of assembly, forms an icosahedral capsid composed of 60 subunits, arranged as a dodecamer of pentamers.

The enzyme catalyses (2S)-2-hydroxy-3-oxobutyl phosphate + 5-amino-6-(D-ribitylamino)uracil = 6,7-dimethyl-8-(1-D-ribityl)lumazine + phosphate + 2 H2O + H(+). Its pathway is cofactor biosynthesis; riboflavin biosynthesis; riboflavin from 2-hydroxy-3-oxobutyl phosphate and 5-amino-6-(D-ribitylamino)uracil: step 1/2. Catalyzes the formation of 6,7-dimethyl-8-ribityllumazine by condensation of 5-amino-6-(D-ribitylamino)uracil with 3,4-dihydroxy-2-butanone 4-phosphate. This is the penultimate step in the biosynthesis of riboflavin. The chain is 6,7-dimethyl-8-ribityllumazine synthase from Idiomarina loihiensis (strain ATCC BAA-735 / DSM 15497 / L2-TR).